The following is a 411-amino-acid chain: uncharacterized protein (411 aa).

Residues 20–199 enclose the UmuC domain; sequence FLYFDFDAFF…LPITEIPGIG (180 aa).

Belongs to the DNA polymerase type-Y family.

This is an uncharacterized protein from Mycoplasma genitalium (strain ATCC 33530 / DSM 19775 / NCTC 10195 / G37) (Mycoplasmoides genitalium).